Here is a 443-residue protein sequence, read N- to C-terminus: tRNA modification GTPase MnmE (443 aa).

The (6S)-5-formyl-5,6,7,8-tetrahydrofolate site is built by arginine 23, glutamate 82, and lysine 121. The 150-residue stretch at glycine 215–glutamine 364 folds into the TrmE-type G domain. Asparagine 225 contributes to the K(+) binding site. GTP is bound by residues asparagine 225–serine 230, threonine 244–threonine 250, and aspartate 269–glycine 272. Serine 229 lines the Mg(2+) pocket. K(+)-binding residues include threonine 244, isoleucine 246, and threonine 249. Threonine 250 contacts Mg(2+). Position 443 (lysine 443) interacts with (6S)-5-formyl-5,6,7,8-tetrahydrofolate.

This sequence belongs to the TRAFAC class TrmE-Era-EngA-EngB-Septin-like GTPase superfamily. TrmE GTPase family. As to quaternary structure, homodimer. Heterotetramer of two MnmE and two MnmG subunits. K(+) serves as cofactor.

It localises to the cytoplasm. Exhibits a very high intrinsic GTPase hydrolysis rate. Involved in the addition of a carboxymethylaminomethyl (cmnm) group at the wobble position (U34) of certain tRNAs, forming tRNA-cmnm(5)s(2)U34. The polypeptide is tRNA modification GTPase MnmE (Chlamydia felis (strain Fe/C-56) (Chlamydophila felis)).